The sequence spans 252 residues: Imidazole glycerol phosphate synthase subunit HisF (252 aa).

Catalysis depends on residues aspartate 11 and aspartate 130.

This sequence belongs to the HisA/HisF family. As to quaternary structure, heterodimer of HisH and HisF.

The protein resides in the cytoplasm. The catalysed reaction is 5-[(5-phospho-1-deoxy-D-ribulos-1-ylimino)methylamino]-1-(5-phospho-beta-D-ribosyl)imidazole-4-carboxamide + L-glutamine = D-erythro-1-(imidazol-4-yl)glycerol 3-phosphate + 5-amino-1-(5-phospho-beta-D-ribosyl)imidazole-4-carboxamide + L-glutamate + H(+). It participates in amino-acid biosynthesis; L-histidine biosynthesis; L-histidine from 5-phospho-alpha-D-ribose 1-diphosphate: step 5/9. Functionally, IGPS catalyzes the conversion of PRFAR and glutamine to IGP, AICAR and glutamate. The HisF subunit catalyzes the cyclization activity that produces IGP and AICAR from PRFAR using the ammonia provided by the HisH subunit. This chain is Imidazole glycerol phosphate synthase subunit HisF, found in Hyphomonas neptunium (strain ATCC 15444).